Consider the following 91-residue polypeptide: Small ribosomal subunit protein uS19 (91 aa).

The protein belongs to the universal ribosomal protein uS19 family.

In terms of biological role, protein S19 forms a complex with S13 that binds strongly to the 16S ribosomal RNA. The polypeptide is Small ribosomal subunit protein uS19 (Prochlorococcus marinus (strain MIT 9303)).